The primary structure comprises 507 residues: Light-independent protochlorophyllide reductase subunit B (507 aa).

Asp36 contributes to the [4Fe-4S] cluster binding site. Catalysis depends on Asp293, which acts as the Proton donor. 428 to 429 (GM) serves as a coordination point for substrate.

It belongs to the ChlB/BchB/BchZ family. Protochlorophyllide reductase is composed of three subunits; ChlL, ChlN and ChlB. Forms a heterotetramer of two ChlB and two ChlN subunits. It depends on [4Fe-4S] cluster as a cofactor.

The protein localises to the plastid. Its subcellular location is the chloroplast. The catalysed reaction is chlorophyllide a + oxidized 2[4Fe-4S]-[ferredoxin] + 2 ADP + 2 phosphate = protochlorophyllide a + reduced 2[4Fe-4S]-[ferredoxin] + 2 ATP + 2 H2O. It participates in porphyrin-containing compound metabolism; chlorophyll biosynthesis (light-independent). Functionally, component of the dark-operative protochlorophyllide reductase (DPOR) that uses Mg-ATP and reduced ferredoxin to reduce ring D of protochlorophyllide (Pchlide) to form chlorophyllide a (Chlide). This reaction is light-independent. The NB-protein (ChlN-ChlB) is the catalytic component of the complex. This Porphyra purpurea (Red seaweed) protein is Light-independent protochlorophyllide reductase subunit B.